Here is a 563-residue protein sequence, read N- to C-terminus: Coiled-coil domain-containing protein 38 (563 aa).

Positions 128–211 (TKKKTIKRFE…SIKSDIAKTE (84 aa)) form a coiled coil. A disordered region spans residues 265–310 (DNSIDSDKMSVSEEWSSRRGSQGGRHGKHTLGQDSRKSSGFTRPES). Residues 269–281 (DSDKMSVSEEWSS) show a composition bias toward basic and acidic residues. Coiled coils occupy residues 361-415 (QDVD…RSRL) and 454-522 (NAVQ…AVAQ). Residues 543–563 (QELLLVSDTRSKSQDEEYFFS) are disordered.

Interacts with CCDC42, CFAP53, IFT88 and ODF2. Interacts with CCDC146. Interacts with TEKT3. Interacts with ubiquitinated histone H2A. In terms of tissue distribution, expressed exclusively in testis where it is detected mainly in spermatogonia and spermatocytes (at protein level).

The protein localises to the cytoplasm. Its subcellular location is the cytoskeleton. It localises to the microtubule organizing center. The protein resides in the centrosome. It is found in the perinuclear region. The protein localises to the cell projection. Its subcellular location is the cilium. It localises to the flagellum. Its function is as follows. Essential for male fertility. Required for sperm flagellum biogenesis. Also required for acrosome biogenesis. Required for the attachment of developing acrosomes to the nucleus during spermiogenesis and may be involved in the transport of fibrous sheath components. This chain is Coiled-coil domain-containing protein 38 (Ccdc38), found in Mus musculus (Mouse).